The following is a 104-amino-acid chain: MMLKPSIDKLLDKVPSRYSLVILQAKRAHELAAGAEPTQEFSSVKYTLQALEEIESGNVIIHPNPEAKRKLARLKVIQARLAAEEEERKIKEQIAKEKEEGDKI.

The protein belongs to the RNA polymerase subunit omega family. As to quaternary structure, the RNAP catalytic core consists of 2 alpha, 1 beta, 1 beta' and 1 omega subunit. When a sigma factor is associated with the core the holoenzyme is formed, which can initiate transcription.

It carries out the reaction RNA(n) + a ribonucleoside 5'-triphosphate = RNA(n+1) + diphosphate. Its function is as follows. Promotes RNA polymerase assembly. Latches the N- and C-terminal regions of the beta' subunit thereby facilitating its interaction with the beta and alpha subunits. The chain is DNA-directed RNA polymerase subunit omega from Streptococcus thermophilus (strain CNRZ 1066).